A 432-amino-acid polypeptide reads, in one-letter code: Ornithine aminotransferase, mitochondrial (432 aa).

The residue at position 287 (lysine 287) is an N6-(pyridoxal phosphate)lysine.

Belongs to the class-III pyridoxal-phosphate-dependent aminotransferase family. As to quaternary structure, homotetramer. The cofactor is pyridoxal 5'-phosphate.

It is found in the mitochondrion matrix. The enzyme catalyses a 2-oxocarboxylate + L-ornithine = L-glutamate 5-semialdehyde + an L-alpha-amino acid. It functions in the pathway amino-acid biosynthesis; L-proline biosynthesis; L-glutamate 5-semialdehyde from L-ornithine: step 1/1. The chain is Ornithine aminotransferase, mitochondrial (Oat) from Drosophila ananassae (Fruit fly).